The following is a 569-amino-acid chain: Glutamate--tRNA ligase (569 aa).

Positions 108-118 (PNPDFVLHLGS) match the 'HIGH' region motif.

The protein belongs to the class-I aminoacyl-tRNA synthetase family. Glutamate--tRNA ligase type 2 subfamily.

The protein resides in the cytoplasm. It catalyses the reaction tRNA(Glu) + L-glutamate + ATP = L-glutamyl-tRNA(Glu) + AMP + diphosphate. Its function is as follows. Catalyzes the attachment of glutamate to tRNA(Glu) in a two-step reaction: glutamate is first activated by ATP to form Glu-AMP and then transferred to the acceptor end of tRNA(Glu). This Thermofilum pendens (strain DSM 2475 / Hrk 5) protein is Glutamate--tRNA ligase.